We begin with the raw amino-acid sequence, 426 residues long: UDP-N-acetylglucosamine--N-acetylmuramyl-(pentapeptide) pyrophosphoryl-undecaprenol N-acetylglucosamine transferase (426 aa).

UDP-N-acetyl-alpha-D-glucosamine-binding positions include 28–30 (TGG), N140, R176, S204, I257, and Q302. Residues 369–388 (AGNGPSGMGNGHSSEQPQER) form a disordered region.

Belongs to the glycosyltransferase 28 family. MurG subfamily.

It is found in the cell inner membrane. The catalysed reaction is di-trans,octa-cis-undecaprenyl diphospho-N-acetyl-alpha-D-muramoyl-L-alanyl-D-glutamyl-meso-2,6-diaminopimeloyl-D-alanyl-D-alanine + UDP-N-acetyl-alpha-D-glucosamine = di-trans,octa-cis-undecaprenyl diphospho-[N-acetyl-alpha-D-glucosaminyl-(1-&gt;4)]-N-acetyl-alpha-D-muramoyl-L-alanyl-D-glutamyl-meso-2,6-diaminopimeloyl-D-alanyl-D-alanine + UDP + H(+). The protein operates within cell wall biogenesis; peptidoglycan biosynthesis. Its function is as follows. Cell wall formation. Catalyzes the transfer of a GlcNAc subunit on undecaprenyl-pyrophosphoryl-MurNAc-pentapeptide (lipid intermediate I) to form undecaprenyl-pyrophosphoryl-MurNAc-(pentapeptide)GlcNAc (lipid intermediate II). The protein is UDP-N-acetylglucosamine--N-acetylmuramyl-(pentapeptide) pyrophosphoryl-undecaprenol N-acetylglucosamine transferase of Xanthomonas axonopodis pv. citri (strain 306).